Reading from the N-terminus, the 299-residue chain is UPF0276 protein ABO_1518 (299 aa).

It belongs to the UPF0276 family.

This chain is UPF0276 protein ABO_1518, found in Alcanivorax borkumensis (strain ATCC 700651 / DSM 11573 / NCIMB 13689 / SK2).